The sequence spans 510 residues: tRNA-2-methylthio-N(6)-dimethylallyladenosine synthase (510 aa).

Residues 19–144 (RTYQVRTFGC…LPVLLERARH (126 aa)) form the MTTase N-terminal domain. Residues C28, C73, C107, C181, C185, and C188 each contribute to the [4Fe-4S] cluster site. A Radical SAM core domain is found at 167 to 397 (RESPYAAWVS…TALQDRITYE (231 aa)). The 71-residue stretch at 400-470 (QAQTGRTLEV…PHYLEADDVS (71 aa)) folds into the TRAM domain. Basic and acidic residues predominate over residues 482-492 (AWEARQARPEP). The tract at residues 482–510 (AWEARQARPEPESTGPRPVGLGLPTLRRA) is disordered.

The protein belongs to the methylthiotransferase family. MiaB subfamily. Monomer. Requires [4Fe-4S] cluster as cofactor.

The protein resides in the cytoplasm. It carries out the reaction N(6)-dimethylallyladenosine(37) in tRNA + (sulfur carrier)-SH + AH2 + 2 S-adenosyl-L-methionine = 2-methylsulfanyl-N(6)-dimethylallyladenosine(37) in tRNA + (sulfur carrier)-H + 5'-deoxyadenosine + L-methionine + A + S-adenosyl-L-homocysteine + 2 H(+). In terms of biological role, catalyzes the methylthiolation of N6-(dimethylallyl)adenosine (i(6)A), leading to the formation of 2-methylthio-N6-(dimethylallyl)adenosine (ms(2)i(6)A) at position 37 in tRNAs that read codons beginning with uridine. The sequence is that of tRNA-2-methylthio-N(6)-dimethylallyladenosine synthase from Kineococcus radiotolerans (strain ATCC BAA-149 / DSM 14245 / SRS30216).